We begin with the raw amino-acid sequence, 301 residues long: D-psicose 3-epimerase (301 aa).

Tyrosine 16 contacts substrate. The active-site Proton donor/acceptor is the glutamate 162. A Mn(2+)-binding site is contributed by glutamate 162. Substrate-binding positions include glutamate 168 and 195-198; that span reads DTFH. Mn(2+)-binding residues include aspartate 195 and histidine 221. Arginine 227 is a substrate binding site. Catalysis depends on glutamate 256, which acts as the Proton donor/acceptor. Mn(2+) is bound at residue glutamate 256.

It belongs to the hyi family. As to quaternary structure, homotetramer. It depends on Mn(2+) as a cofactor. The cofactor is Co(2+).

It carries out the reaction D-allulose = keto-D-fructose. With respect to regulation, completely inhibited by EDTA and partially inhibited by Zn(2+), Mg(2+) and Cu(2+). Involved in the biosynthesis of D-psicose. Catalyzes the reversible epimerization of D-fructose at the C3 position to yield D-psicose. The enzyme is highly specific for D-psicose and shows very low activity with D-tagatose. In Enterocloster bolteae (strain ATCC BAA-613 / DSM 15670 / CCUG 46953 / JCM 12243 / WAL 16351) (Clostridium bolteae), this protein is D-psicose 3-epimerase.